A 974-amino-acid polypeptide reads, in one-letter code: MAAEAAGGKYRSTVSKSKDPSGLLISVIRTLSTSDDVEDRENEKGRLEEAYEKCDRDLDELIVQHYTELTTAIRTYQSITERITNSRNKIKQVKENLLSCKMLLHCKRDELRKLWIEGIEHKHVLNLLDEIENIKQVPQKLEQCMASKHYLSATDMLVSAVESLEGPLLQVEGLSDLRLELHSKKMNLHLVLIDELHRHLYIKSTSRVVQRNKEKGKISSLVKDASVPLIDVTNLPTPRKFLDTSHYSTAGSSSVREINLQDIKEDLELDPEENSTLFMGILIKGLAKLKKIPETVKAIIERLEQELKQIVKRSTTQVADSGYQRGENVTVENQPRLLLELLELLFDKFNAVAAAHSVVLGYLQDTVVTPLTQQEDIKLYDMADVWVKIQDVLQMLLTEYLDMKNTRTASEPSAQLSYASTGREFAAFFAKKKPQRPKNSLFKFESSSHAISMSAYLREQRRELYSRSGELQGGPDDNLIEGGGTKFVCKPGARNITVIFHPLLRFIQEIEHALGLGPAKQCPLREFLTVYIKNIFLNQVLAEINKEIEGVTKTSDPLKILANADTMKVLGVQRPLLQSTIIVEKTVQDLLNLMHDLSAYSDQFLNMVCVKLQEYKDTCTAAYRGIVQSEEKLVISASWAKDDDISRLLKSLPNWMNMAQPKQLRPKREEEEDFIRAAFGKESEVLIGNLGDKLIPPQDILRDVSDLKALANMHESLEWLASRTKSAFSNLSTSQMLSPAQDSHTNTDLPPVSEQIMQTLSELAKSFQDMADRCLLVLHLEVRVHCFHYLIPLAKEGNYAIVANVESMDYDPLVVKLNKDISAIEEAMSASLQQHKFQYIFEGLGHLISCILINGAQYFRRISESGIKKMCRNIFVLQQNLTNITMSREADLDFARQYYEMLYNTADELLNLVVDQGVKYTELEYIHALTLLHRSQTGVGELTTQNTRLQRLKEIICEQAAIKQATKDKKITTV.

Position 2 is an N-acetylalanine (Ala-2). Lys-9 bears the N6-acetyllysine mark. Phosphoserine occurs at positions 32 and 226. Residues 32–114 (STSDDVEDRE…HCKRDELRKL (83 aa)) are a coiled coil. Phosphothreonine occurs at positions 233 and 237. Phosphoserine is present on Ser-468.

Belongs to the SEC8 family. In terms of assembly, the exocyst complex is composed of EXOC1, EXOC2, EXOC3, EXOC4, EXOC5, EXOC6, EXOC7 and EXOC8. Interacts with BIRC6/bruce. Interacts with MYRIP. Interacts with SH3BP1; required for the localization of both SH3BP1 and the exocyst to the leading edge of migrating cells. Interacts with SLC6A9.

The protein resides in the midbody. Its subcellular location is the midbody ring. It is found in the cell projection. It localises to the cytoplasm. The protein localises to the cytoskeleton. The protein resides in the microtubule organizing center. Its subcellular location is the centrosome. In terms of biological role, component of the exocyst complex involved in the docking of exocytic vesicles with fusion sites on the plasma membrane. This Homo sapiens (Human) protein is Exocyst complex component 4 (EXOC4).